The primary structure comprises 473 residues: Cell division protein FtsZ homolog 2-2, chloroplastic (473 aa).

Residues 124-128 (GGGSN), 213-215 (GTG), Glu-244, and Arg-248 contribute to the GTP site. Phosphothreonine; by PGK1 is present on Thr-282. Residue Asp-292 participates in GTP binding. The segment at 424-455 (EEGEGRPLQATQADASMGATRRPSSSFTEGSS) is disordered. Positions 445–454 (RPSSSFTEGS) are enriched in polar residues.

The protein belongs to the FtsZ family. As to quaternary structure, aggregates to form a contractile ring-like structure; contraction of the ring was accompanied by an increase in the filament turnover rate. Self-interacts and binds to FTSZ1 in heteropolymers to form two morphologically distinct types of filaments, termed type-I (smooth filaments) and -II (rough filaments), in a GTP-dependent manner. Part of a complex made of ARC3, ARC6, FTSZ1 and FTSZ2. Interacts (via C-terminus) with ARC6. Interacts with CDP1/PARC6. Binds to PGK1. In terms of processing, phosphorylation at Thr-282 is required for the formation of contractile ring at the chloroplast midpoint.

It is found in the plastid. The protein resides in the chloroplast stroma. It localises to the chloroplast thylakoid membrane. Functionally, exhibits GTPase activity. Component of the plastid division machinery that forms a contractile ring at the division site. Contributes to plastid division in the vegetative shoot apex, at the shoot apical meristem (SAM) where the proplastid-to-chloroplast transition takes place. This is Cell division protein FtsZ homolog 2-2, chloroplastic from Arabidopsis thaliana (Mouse-ear cress).